The primary structure comprises 1268 residues: Vigilin (1268 aa).

Ser-2 bears the N-acetylserine mark. Thr-8 carries the post-translational modification Phosphothreonine. Phosphoserine occurs at positions 11 and 31. 7 KH domains span residues 150–212 (QASA…RHEV), 222–284 (RAVE…VARI), 295–357 (TTTI…LTEV), 364–424 (FTVS…QEQI), 435–497 (MDYV…KREL), 507–570 (ERTK…TKYM), and 581–643 (SYSI…RSRI). A phosphothreonine mark is found at Thr-295 and Thr-296. Ser-317 is modified (phosphoserine). Tyr-437 is modified (phosphotyrosine). Ser-645 is subject to Phosphoserine. KH domains are found at residues 653 to 716 (IAEV…KKQL), 727 to 790 (SFTV…QKEL), 800 to 863 (VVED…KKRI), 873 to 967 (QVTV…KEAL), 972 to 1034 (PVTI…KAGL), 1052 to 1117 (SFKL…RDAI), and 1127 to 1190 (MVSE…IDHI). Residues 910-947 (PDREENPVHSVEPSIQENGDEAGEGREAKETDPGSPRR) are disordered. The segment covering 932-947 (GEGREAKETDPGSPRR) has biased composition (basic and acidic residues). Lys-991 carries the N6-acetyllysine modification. Residues 1213–1268 (PPAHEESRAPSKGFVVRDAPWTSNSSEKAPDMSSSEEFPSFGAQVAPKTLPWGPKR) form a disordered region. The span at 1233–1249 (WTSNSSEKAPDMSSSEE) shows a compositional bias: polar residues. Phosphoserine is present on residues Ser-1247 and Ser-1252.

The protein resides in the cytoplasm. Its subcellular location is the nucleus. Appears to play a role in cell sterol metabolism. It may function to protect cells from over-accumulation of cholesterol. In Mus musculus (Mouse), this protein is Vigilin (Hdlbp).